Consider the following 109-residue polypeptide: Set1 complex component sdc1 (109 aa).

The disordered stretch occupies residues 49-109 (QQKQKEIVNQ…SSNPGKNSAS (61 aa)). Residues 73-87 (STPTMAEQVQTSFSN) are compositionally biased toward polar residues. Over residues 88-101 (PASTPLTQTSSPSS) the composition is skewed to low complexity.

The protein belongs to the dpy-30 family. Component of the COMPASS (Set1C) complex composed of ash2, sdc1, set1, shg1, spp1, swd1, swd2 and swd3. Component of the Lid2 complex composed of ash2, jmj3, lid2, sdc1 and snt2.

It is found in the nucleus. In terms of biological role, the COMPASS (Set1C) complex specifically mono-, di- and trimethylates histone H3 to form H3K4me1/2/3, which subsequently activates gene expression by regulating transcription elongation and plays a role in telomere length maintenance. The protein is Set1 complex component sdc1 (sdc1) of Schizosaccharomyces pombe (strain 972 / ATCC 24843) (Fission yeast).